Here is a 245-residue protein sequence, read N- to C-terminus: 1-(5-phosphoribosyl)-5-[(5-phosphoribosylamino)methylideneamino] imidazole-4-carboxamide isomerase (245 aa).

The Proton acceptor role is filled by Asp7. Asp129 serves as the catalytic Proton donor.

This sequence belongs to the HisA/HisF family.

Its subcellular location is the cytoplasm. The enzyme catalyses 1-(5-phospho-beta-D-ribosyl)-5-[(5-phospho-beta-D-ribosylamino)methylideneamino]imidazole-4-carboxamide = 5-[(5-phospho-1-deoxy-D-ribulos-1-ylimino)methylamino]-1-(5-phospho-beta-D-ribosyl)imidazole-4-carboxamide. Its pathway is amino-acid biosynthesis; L-histidine biosynthesis; L-histidine from 5-phospho-alpha-D-ribose 1-diphosphate: step 4/9. The chain is 1-(5-phosphoribosyl)-5-[(5-phosphoribosylamino)methylideneamino] imidazole-4-carboxamide isomerase from Escherichia coli O17:K52:H18 (strain UMN026 / ExPEC).